The sequence spans 180 residues: UPF0227 protein YcfP (180 aa).

The protein belongs to the UPF0227 family.

The chain is UPF0227 protein YcfP from Salmonella arizonae (strain ATCC BAA-731 / CDC346-86 / RSK2980).